The primary structure comprises 406 residues: Vacuole membrane protein 1 (406 aa).

Residue Ala-2 is modified to N-acetylalanine. At 2–43 (AENGQNCDQRRVAMNKEQYNGNFTDPSSVNEKKRRDREERQN) the chain is on the cytoplasmic side. The chain crosses the membrane as a helical span at residues 44-63 (IVLWRQPLITLQYFSLETLV). Residues 64–77 (ILKEWTSKLWHRQS) lie on the Extracellular side of the membrane. A helical transmembrane segment spans residues 78–98 (IVVSFLLLLAVLTATYYVEGA). At 99–109 (HQQYVQRIEKQ) the chain is on the cytoplasmic side. Residues 110-130 (FLLYAYWIGLGILSSVGLGTG) form a helical membrane-spanning segment. Over 131 to 250 (LHTFLLYLGP…ASRAKLAVQN (120 aa)) the chain is Extracellular. The segment at 173 to 316 (GTEGTISLWS…FVIVAFSKHI (144 aa)) is VTT domain. The chain crosses the membrane as a helical span at residues 251–271 (LVQKVGFFGILACASIPNPLF). Over 272–273 (DL) the chain is Cytoplasmic. The helical transmembrane segment at 274–294 (AGITCGHFLVPFWTFFGATLI) threads the bilayer. Residues 295 to 306 (GKAIIKMHIQKL) lie on the Extracellular side of the membrane. The chain crosses the membrane as a helical span at residues 307 to 327 (FVIVAFSKHIVEQMVAFIGAV). Topologically, residues 328-363 (PGIGPSLQKPFQEYLEAQRQKLHHRSEMGTPQGENW) are cytoplasmic. The helical transmembrane segment at 364–384 (LSWMFEKLVVVMVCYFILSII) threads the bilayer. Topologically, residues 385–406 (NSMAQSYAKRIQQRLDPKEKTK) are extracellular.

The protein belongs to the VMP1 family. Interacts with BECN1. Interacts with TJP1. Interacts with TP53INP2. Interacts with TMEM41B. Interacts with ATP2A2, PLN and SLN; competes with PLN and SLN to prevent them from forming an inhibitory complex with ATP2A2. Interacts with ATG2A.

The protein localises to the endoplasmic reticulum-Golgi intermediate compartment membrane. The protein resides in the cell membrane. It is found in the vacuole membrane. It localises to the endoplasmic reticulum membrane. The enzyme catalyses a 1,2-diacyl-sn-glycero-3-phospho-L-serine(in) = a 1,2-diacyl-sn-glycero-3-phospho-L-serine(out). It catalyses the reaction cholesterol(in) = cholesterol(out). It carries out the reaction a 1,2-diacyl-sn-glycero-3-phosphocholine(in) = a 1,2-diacyl-sn-glycero-3-phosphocholine(out). The catalysed reaction is a 1,2-diacyl-sn-glycero-3-phosphoethanolamine(in) = a 1,2-diacyl-sn-glycero-3-phosphoethanolamine(out). Phospholipid scramblase involved in lipid homeostasis and membrane dynamics processes. Has phospholipid scramblase activity toward cholesterol and phosphatidylserine, as well as phosphatidylethanolamine and phosphatidylcholine. Required for autophagosome formation: participates in early stages of autophagosome biogenesis at the endoplasmic reticulum (ER) membrane by reequilibrating the leaflets of the ER as lipids are extracted by ATG2 (ATG2A or ATG2B) to mediate autophagosome assembly. Regulates ATP2A2 activity to control ER-isolation membrane contacts for autophagosome formation. In addition to autophagy, involved in other processes in which phospholipid scramblase activity is required. Modulates ER contacts with lipid droplets, mitochondria and endosomes. Plays an essential role in formation of cell junctions. Upon stress such as bacterial and viral infection, promotes formation of cytoplasmic vacuoles followed by cell death. Involved in the cytoplasmic vacuolization of acinar cells during the early stage of acute pancreatitis. In Bos taurus (Bovine), this protein is Vacuole membrane protein 1.